The following is a 256-amino-acid chain: uncharacterized protein (256 aa).

A compositionally biased stretch (basic and acidic residues) spans Ala-201 to Gly-214. Residues Ala-201 to Ser-231 form a disordered region. Acidic residues predominate over residues Gly-215 to Ser-231.

Its subcellular location is the mitochondrion. This is an uncharacterized protein from Zea mays (Maize).